A 247-amino-acid polypeptide reads, in one-letter code: RNA-free ribonuclease P (247 aa).

Residues 223–247 (SPEGEKEKGEADKKKKSHSEEAEFI) are disordered.

It belongs to the HARP family.

The catalysed reaction is Endonucleolytic cleavage of RNA, removing 5'-extranucleotides from tRNA precursor.. Functionally, RNA-free RNase P that catalyzes the removal of the 5'-leader sequence from pre-tRNA to produce the mature 5'-terminus. The chain is RNA-free ribonuclease P from Methanosarcina acetivorans (strain ATCC 35395 / DSM 2834 / JCM 12185 / C2A).